Consider the following 439-residue polypeptide: Adenylosuccinate synthetase (439 aa).

GTP is bound by residues 25-31 (GDEGKGK), 53-55 (GHT), and lysine 62. Aspartate 26 serves as the catalytic Proton acceptor. 2 residues coordinate Mg(2+): aspartate 26 and glycine 53. Residues 26–29 (DEGK) and 51–54 (NAGH) contribute to the IMP site. Residue histidine 54 is the Proton donor of the active site. Threonine 141, arginine 155, asparagine 232, and threonine 247 together coordinate IMP. Threonine 307 contacts GTP. 307 to 313 (TTTNRPR) serves as a coordination point for substrate. Residue arginine 311 participates in IMP binding. Residues arginine 313, 339-341 (KLD), and 425-427 (GVG) contribute to the GTP site.

Belongs to the adenylosuccinate synthetase family. Homodimer. Requires Mg(2+) as cofactor.

It is found in the cytoplasm. It catalyses the reaction IMP + L-aspartate + GTP = N(6)-(1,2-dicarboxyethyl)-AMP + GDP + phosphate + 2 H(+). Its pathway is purine metabolism; AMP biosynthesis via de novo pathway; AMP from IMP: step 1/2. In terms of biological role, plays an important role in the salvage pathway for purine nucleotide biosynthesis. Catalyzes the first committed step in the biosynthesis of AMP from IMP. The protein is Adenylosuccinate synthetase of Plasmodium yoelii yoelii.